The following is a 375-amino-acid chain: Delta(12) fatty acid dehydrogenase (375 aa).

Helical transmembrane passes span 54-74 (IIAY…PAPL) and 77-97 (LAWP…WVIG). The Histidine box-1 motif lies at 98-102 (HECGH). The helical transmembrane segment at 110 to 130 (WVDDTVGFILHSFLMTPYFSW) threads the bilayer. The short motif at 134–138 (HRNHH) is the Histidine box-2 element. 3 helical membrane-spanning segments follow: residues 172 to 192 (LLIM…TNIS), 218 to 238 (VLLS…AVAA), and 242 to 262 (AWVT…FDII). A Histidine box-3 motif is present at residues 308-312 (HVMHH).

Belongs to the fatty acid desaturase type 1 family. It depends on Fe cation as a cofactor. In terms of tissue distribution, seed.

The protein localises to the membrane. The enzyme catalyses a (9Z,12Z)-octadecadienoyl-containing glycerolipid + 2 Fe(II)-[cytochrome b5] + O2 + 2 H(+) = a (9Z)-octadec-9-en-12-ynoyl-containing glycerolipid + 2 Fe(III)-[cytochrome b5] + 2 H2O. It participates in lipid metabolism; polyunsaturated fatty acid biosynthesis. In terms of biological role, changes the delta-12 double bond of linoleic acid into a triple bond in the biosynthesis of crepenynic acid. The chain is Delta(12) fatty acid dehydrogenase from Crepis alpina (Hawksbeard).